The primary structure comprises 91 residues: Late embryogenis abundant protein 2 (91 aa).

Positions 47 to 72 are disordered; the sequence is KRAGEASSEKAPWVPDPKTGYYRPET.

This sequence belongs to the LEA type 3 family.

Its subcellular location is the cytoplasm. The protein resides in the nucleus. This chain is Late embryogenis abundant protein 2, found in Arabidopsis thaliana (Mouse-ear cress).